We begin with the raw amino-acid sequence, 155 residues long: uncharacterized protein (155 aa).

Transmembrane regions (helical) follow at residues 2 to 24 (TFLFLILVFIIEILQLSVFPPIF), 62 to 84 (AVVNFLGFISLLNVVFTYLYLVL), 97 to 116 (VFLIMPLILLLRKLTIFLVV), and 131 to 148 (VVLLIDLIFLILLYKVFN).

The protein localises to the cell membrane. This is an uncharacterized protein from Aquifex aeolicus (strain VF5).